Consider the following 497-residue polypeptide: Indoleacetaldoxime dehydratase (497 aa).

Residues 2–20 traverse the membrane as a helical segment; sequence EMILSISLCLTTLITLLLL. C439 serves as a coordination point for heme.

The protein belongs to the cytochrome P450 family.

It localises to the membrane. It catalyses the reaction (E)-(indol-3-yl)acetaldehyde oxime = (indol-3-yl)acetonitrile + H2O. In terms of biological role, involved in the biosynthesis of the indole-derived phytoalexin camalexin. Catalyzes the conversion of indole-3-acetaldoxime to indole-3-acetonitrile. Required for resistance to A.brassicicola and B.cinerea. The chain is Indoleacetaldoxime dehydratase (CYP71A13) from Arabidopsis thaliana (Mouse-ear cress).